We begin with the raw amino-acid sequence, 180 residues long: Putative adenylate kinase (180 aa).

ATP contacts are provided by G10, G12, K13, T14, and T15. The tract at residues 30-50 (NLRDFALEKGCGREVDGEVEV) is NMP. The segment at 99-109 (ERGYSKEKIGE) is LID. ATP contacts are provided by R100 and K138.

It belongs to the adenylate kinase family. AK6 subfamily. As to quaternary structure, interacts with uS11. Not a structural component of 40S pre-ribosomes, but transiently interacts with them by binding to uS11.

The catalysed reaction is AMP + ATP = 2 ADP. It carries out the reaction ATP + H2O = ADP + phosphate + H(+). Broad-specificity nucleoside monophosphate (NMP) kinase that catalyzes the reversible transfer of the terminal phosphate group between nucleoside triphosphates and monophosphates. Also has ATPase activity. Involved in the late maturation steps of the 30S ribosomal particles, specifically 16S rRNA maturation. While NMP activity is not required for ribosome maturation, ATPase activity is. Associates transiently with small ribosomal subunit protein uS11. ATP hydrolysis breaks the interaction with uS11. May temporarily remove uS11 from the ribosome to enable a conformational change of the ribosomal RNA that is needed for the final maturation step of the small ribosomal subunit. The sequence is that of Putative adenylate kinase from Pyrococcus abyssi (strain GE5 / Orsay).